An 888-amino-acid polypeptide reads, in one-letter code: Prodigiosin synthesizing transferase PigC (888 aa).

The protein belongs to the PigC family.

Its pathway is antibiotic biosynthesis; prodigiosin biosynthesis. Its function is as follows. Involved in the biosynthesis of 2-methyl-3-n-amyl-pyrrole (MAP), one of the terminal products involved in the biosynthesis of the red antibiotic prodigiosin (Pig). Catalyzes the transfer of 2-methyl-3-n-amyl-pyrrole (MAP) to 4-methoxy-2,2'-bipyrrole-5-carbaldehyde (MBC) to yield prodigiosin. It is able to use substrates with a variety of monocyclic rings in place of the pyrrolic ring A of its natural substrate. In Serratia marcescens, this protein is Prodigiosin synthesizing transferase PigC.